A 75-amino-acid polypeptide reads, in one-letter code: Protein Tlp homolog (75 aa).

A disordered region spans residues 53–75 (REALDGMREEIKDEARDKKNGYM).

The protein belongs to the Tlp family.

The chain is Protein Tlp homolog from Clostridium botulinum (strain ATCC 19397 / Type A).